Here is a 376-residue protein sequence, read N- to C-terminus: Enoyl-[acyl-carrier-protein] reductase, mitochondrial (376 aa).

The N-terminal 12 residues, 1 to 12, are a transit peptide targeting the mitochondrion; that stretch reads MLRTLRTSQLAR. The Proton donor role is filled by Y79. Residues N160, 183-186, 206-208, 277-280, 302-304, and K368 each bind NADP(+); these read NSGV, RDR, YGGM, and YWL.

It belongs to the zinc-containing alcohol dehydrogenase family. Quinone oxidoreductase subfamily. Homodimer.

The protein resides in the mitochondrion matrix. The catalysed reaction is a 2,3-saturated acyl-[ACP] + NADP(+) = a (2E)-enoyl-[ACP] + NADPH + H(+). Functionally, catalyzes the NADPH-dependent reduction of trans-2-enoyl thioesters in mitochondrial fatty acid synthesis (fatty acid synthesis type II). Fatty acid chain elongation in mitochondria uses acyl carrier protein (ACP) as an acyl group carrier, but the enzyme accepts both ACP and CoA thioesters as substrates in vitro. Required for respiration and the maintenance of the mitochondrial compartment. In Yarrowia lipolytica (strain CLIB 122 / E 150) (Yeast), this protein is Enoyl-[acyl-carrier-protein] reductase, mitochondrial (ETR1).